The primary structure comprises 300 residues: N-acetylmuramic acid 6-phosphate etherase (300 aa).

One can recognise an SIS domain in the interval 57 to 220; that stretch reads VSAAFARQGR…SSAAMIRSGK (164 aa). The Proton donor role is filled by glutamate 85. Residue glutamate 116 is part of the active site.

The protein belongs to the GCKR-like family. MurNAc-6-P etherase subfamily. In terms of assembly, homodimer.

The enzyme catalyses N-acetyl-D-muramate 6-phosphate + H2O = N-acetyl-D-glucosamine 6-phosphate + (R)-lactate. The protein operates within amino-sugar metabolism; N-acetylmuramate degradation. It functions in the pathway amino-sugar metabolism; 1,6-anhydro-N-acetylmuramate degradation. It participates in cell wall biogenesis; peptidoglycan recycling. In terms of biological role, specifically catalyzes the cleavage of the D-lactyl ether substituent of MurNAc 6-phosphate, producing GlcNAc 6-phosphate and D-lactate. Together with AnmK, is also required for the utilization of anhydro-N-acetylmuramic acid (anhMurNAc) either imported from the medium or derived from its own cell wall murein, and thus plays a role in cell wall recycling. The chain is N-acetylmuramic acid 6-phosphate etherase from Edwardsiella ictaluri (strain 93-146).